The following is a 248-amino-acid chain: UPF0736 protein BcerKBAB4_1085 (248 aa).

Belongs to the UPF0736 family.

In Bacillus mycoides (strain KBAB4) (Bacillus weihenstephanensis), this protein is UPF0736 protein BcerKBAB4_1085.